The sequence spans 501 residues: Cytoplasmic tRNA 2-thiolation protein 2 (501 aa).

Basic and acidic residues predominate over residues 1–12; that stretch reads MCEMSEEYRESA. 2 disordered regions span residues 1-23 and 192-214; these read MCEMSEEYRESAPKGPPPPRLGT and GVERQSQHCAQDPQSPTGPPTTA. An N-acetylcysteine modification is found at Cys-2. Ser-492 is subject to Phosphoserine.

Belongs to the CTU2/NCS2 family. Component of a complex at least composed of URM1, CTU2/NCS2 and CTU1/ATPBD3.

It is found in the cytoplasm. It functions in the pathway tRNA modification; 5-methoxycarbonylmethyl-2-thiouridine-tRNA biosynthesis. Plays a central role in 2-thiolation of mcm(5)S(2)U at tRNA wobble positions of tRNA(Lys), tRNA(Glu) and tRNA(Gln). May act by forming a heterodimer with CTU1/ATPBD3 that ligates sulfur from thiocarboxylated URM1 onto the uridine of tRNAs at wobble position. The protein is Cytoplasmic tRNA 2-thiolation protein 2 of Bos taurus (Bovine).